Here is a 188-residue protein sequence, read N- to C-terminus: dTTP/UTP pyrophosphatase (188 aa).

Aspartate 70 (proton acceptor) is an active-site residue.

Belongs to the Maf family. YhdE subfamily. A divalent metal cation is required as a cofactor.

The protein resides in the cytoplasm. The enzyme catalyses dTTP + H2O = dTMP + diphosphate + H(+). It catalyses the reaction UTP + H2O = UMP + diphosphate + H(+). Functionally, nucleoside triphosphate pyrophosphatase that hydrolyzes dTTP and UTP. May have a dual role in cell division arrest and in preventing the incorporation of modified nucleotides into cellular nucleic acids. In Clostridium botulinum (strain Alaska E43 / Type E3), this protein is dTTP/UTP pyrophosphatase.